Reading from the N-terminus, the 242-residue chain is Transcription factor TCP17 (242 aa).

The TCP domain occupies 33 to 91; sequence GKDRHSKVCTVRGLRDRRIRLSVMTAIQVYDLQERLGLSQPSKVIDWLLEVAKNDVDLL.

In terms of assembly, interacts with SPL. As to expression, expressed in cotyledons, particularly in the vascular region, in leaves, roots, stems, buds, flowers and siliques.

The protein resides in the nucleus. Plays a pivotal role in the control of morphogenesis of shoot organs by negatively regulating the expression of boundary-specific genes such as CUC genes, probably through the induction of miRNA (e.g. miR164). Participates in ovule development. In Arabidopsis thaliana (Mouse-ear cress), this protein is Transcription factor TCP17 (TCP17).